Here is a 361-residue protein sequence, read N- to C-terminus: Diacylglycerol O-acyltransferase 2 (361 aa).

At Met1–Gln42 the chain is on the cytoplasmic side. A helical transmembrane segment spans residues Ile43 to Thr61. At Ala62–Val65 the chain is on the lumenal side. A helical membrane pass occupies residues Tyr66 to Leu85. Residues Asp86–Val361 lie on the Cytoplasmic side of the membrane.

It belongs to the diacylglycerol acyltransferase family.

It is found in the endoplasmic reticulum membrane. The protein localises to the lipid droplet. It localises to the cytoplasm. The protein resides in the perinuclear region. The catalysed reaction is an acyl-CoA + a 1,2-diacyl-sn-glycerol = a triacyl-sn-glycerol + CoA. The enzyme catalyses all-trans-retinol + an acyl-CoA = an all-trans-retinyl ester + CoA. It catalyses the reaction 2-(9Z-octadecenoyl)-glycerol + (9Z)-octadecenoyl-CoA = 1,2-di-(9Z-octadecenoyl)-sn-glycerol + CoA. It carries out the reaction 1,2-di-(9Z-octadecenoyl)-sn-glycerol + (9Z)-octadecenoyl-CoA = 1,2,3-tri-(9Z-octadecenoyl)-glycerol + CoA. The catalysed reaction is all-trans-retinol + hexadecanoyl-CoA = all-trans-retinyl hexadecanoate + CoA. The enzyme catalyses 1-O-(9Z-octadecenyl)-glycerol + (9Z)-octadecenoyl-CoA = 1-O-(9Z-octadecyl)-3-(9Z-octadecenoyl)-glycerol + CoA. It catalyses the reaction 1-(9Z-octadecenoyl)-glycerol + (9Z)-octadecenoyl-CoA = 1,2-di-(9Z-octadecenoyl)-glycerol + CoA. It carries out the reaction 1,2-di-(9Z-octadecenoyl)-sn-glycerol + hexadecanoyl-CoA = 1,2-di-(9Z)-octadecenoyl-3-hexadecanoyl-sn-glycerol + CoA. The catalysed reaction is 1,3-di-(9Z-octadecenoyl)-glycerol + (9Z)-octadecenoyl-CoA = 1,2,3-tri-(9Z-octadecenoyl)-glycerol + CoA. The enzyme catalyses 2,3-di-(9Z)-octadecenoyl-sn-glycerol + (9Z)-octadecenoyl-CoA = 1,2,3-tri-(9Z-octadecenoyl)-glycerol + CoA. It catalyses the reaction 2-(9Z-octadecenoyl)-glycerol + hexadecanoyl-CoA = 1-hexadecanoyl-2-(9Z-octadecenoyl)-sn-glycerol + CoA. It participates in glycerolipid metabolism; triacylglycerol biosynthesis. Essential acyltransferase that catalyzes the terminal and only committed step in triacylglycerol synthesis by using diacylglycerol and fatty acyl CoA as substrates. Required for synthesis and storage of intracellular triglycerides. Probably plays a central role in cytosolic lipid accumulation. The polypeptide is Diacylglycerol O-acyltransferase 2 (dgat2) (Xenopus tropicalis (Western clawed frog)).